Here is a 634-residue protein sequence, read N- to C-terminus: Knob-associated histidine-rich protein (634 aa).

Residues 1–34 (MKSFKNKNTLRRKKAFPVFTKILLVSFLVWVLKC) form the signal peptide. N-linked (GlcNAc...) asparagine glycosylation is present at asparagine 42. Residues 57-87 (AQKQHEHHHHHHHQHQHQHQAPHQAHHHHHH) are compositionally biased toward basic residues. Disordered regions lie at residues 57 to 143 (AQKQ…QVFR) and 347 to 634 (SSVN…GCCG). A compositionally biased stretch (low complexity) spans 95 to 104 (PQVHQQVHGQ). The segment covering 108 to 117 (HHHHHHHHHQ) has biased composition (basic residues). 2 stretches are compositionally biased toward basic and acidic residues: residues 354–375 (KHGD…EGEK) and 396–405 (KDNEDAESVK). A compositionally biased stretch (basic residues) spans 406-422 (SKKHKSHDCEKKKSKKH). 2 stretches are compositionally biased toward basic and acidic residues: residues 423–444 (KDNE…GEKH) and 453–493 (KTNE…KKVD). The segment covering 494–505 (STSADNKSTNAA) has biased composition (polar residues). Residues 509–520 (AKDKTQGGKTDK) show a composition bias toward basic and acidic residues. Repeat copies occupy residues 540–549 (TKGATKEAST), 550–559 (SKEATKEAST), 560–569 (SKGATKEAST), and 570–579 (TEGATKGAST). The 4 X 10 AA tandem repeats of [TS]-[KE]-[GE]-A-T-K-[EG]-A-S-T stretch occupies residues 540 to 580 (TKGATKEASTSKEATKEASTSKGATKEASTTEGATKGASTT). A compositionally biased stretch (low complexity) spans 567–591 (ASTTEGATKGASTTAGSTTGATTGA). Positions 605–620 (AANNGEQVMSRGQAQL) are enriched in polar residues. Over residues 625–634 (KKKKKRGCCG) the composition is skewed to basic residues.

The protein resides in the secreted. In terms of biological role, KAHRP might mimick human histidine-rich glycoproteins to anchor host thrombospondin or a parasite analog in a binding complex with the endothelial cell receptor. This Plasmodium falciparum (isolate FCR-3 / Gambia) protein is Knob-associated histidine-rich protein.